The chain runs to 288 residues: Acetyl-coenzyme A carboxylase carboxyl transferase subunit beta (288 aa).

The region spanning 32 to 288 is the CoA carboxyltransferase N-terminal domain; that stretch reads LFAKCPACKH…LELHTEVENV (257 aa). Zn(2+) contacts are provided by cysteine 36, cysteine 39, cysteine 54, and cysteine 57. The segment at 36–57 adopts a C4-type zinc-finger fold; sequence CPACKHTIYQKDLGKNKVCPNC.

This sequence belongs to the AccD/PCCB family. In terms of assembly, acetyl-CoA carboxylase is a heterohexamer composed of biotin carboxyl carrier protein (AccB), biotin carboxylase (AccC) and two subunits each of ACCase subunit alpha (AccA) and ACCase subunit beta (AccD). The cofactor is Zn(2+).

Its subcellular location is the cytoplasm. The catalysed reaction is N(6)-carboxybiotinyl-L-lysyl-[protein] + acetyl-CoA = N(6)-biotinyl-L-lysyl-[protein] + malonyl-CoA. It functions in the pathway lipid metabolism; malonyl-CoA biosynthesis; malonyl-CoA from acetyl-CoA: step 1/1. Component of the acetyl coenzyme A carboxylase (ACC) complex. Biotin carboxylase (BC) catalyzes the carboxylation of biotin on its carrier protein (BCCP) and then the CO(2) group is transferred by the transcarboxylase to acetyl-CoA to form malonyl-CoA. The polypeptide is Acetyl-coenzyme A carboxylase carboxyl transferase subunit beta (Lactococcus lactis subsp. cremoris (strain MG1363)).